The chain runs to 363 residues: Peptide chain release factor 2 (363 aa).

Gln-251 is subject to N5-methylglutamine.

The protein belongs to the prokaryotic/mitochondrial release factor family. In terms of processing, methylated by PrmC. Methylation increases the termination efficiency of RF2.

The protein resides in the cytoplasm. Peptide chain release factor 2 directs the termination of translation in response to the peptide chain termination codons UGA and UAA. The chain is Peptide chain release factor 2 (prfB) from Helicobacter pylori (strain ATCC 700392 / 26695) (Campylobacter pylori).